Reading from the N-terminus, the 249-residue chain is uncharacterized protein (249 aa).

The S4 RNA-binding domain maps to 7–64; that stretch reads PRVHVFLAEKGVGSRRFCEELIRKKLVRVNNTIAKLGDKVTLGDRIIYKKQIFVFKDF. The active-site Nucleophile is the Asp-112.

The protein belongs to the pseudouridine synthase RsuA family.

The catalysed reaction is a uridine in RNA = a pseudouridine in RNA. This is an uncharacterized protein from Borreliella burgdorferi (strain ATCC 35210 / DSM 4680 / CIP 102532 / B31) (Borrelia burgdorferi).